Consider the following 314-residue polypeptide: Methionyl-tRNA formyltransferase (314 aa).

S109–P112 serves as a coordination point for (6S)-5,6,7,8-tetrahydrofolate.

This sequence belongs to the Fmt family.

It catalyses the reaction L-methionyl-tRNA(fMet) + (6R)-10-formyltetrahydrofolate = N-formyl-L-methionyl-tRNA(fMet) + (6S)-5,6,7,8-tetrahydrofolate + H(+). Functionally, attaches a formyl group to the free amino group of methionyl-tRNA(fMet). The formyl group appears to play a dual role in the initiator identity of N-formylmethionyl-tRNA by promoting its recognition by IF2 and preventing the misappropriation of this tRNA by the elongation apparatus. The protein is Methionyl-tRNA formyltransferase of Dictyoglomus turgidum (strain DSM 6724 / Z-1310).